The following is a 170-amino-acid chain: Putative 3-methyladenine DNA glycosylase (170 aa).

It belongs to the DNA glycosylase MPG family.

The chain is Putative 3-methyladenine DNA glycosylase from Sodalis glossinidius.